A 168-amino-acid chain; its full sequence is MGFVLFSQLPSFLLVSTLLLFLVISHSCRAQNSQQDYLDAHNTARADVGVEPLTWDDQVAAYAQNYASQLAADCNLVHSHGQYGENLAEGSGDFMTAAKAVEMWVDEKQYYDHDSNTCAQGQVCGHYTQVVWRNSVRVGCARVQCNNGGYVVSCNYDPPGNYRGESPY.

The N-terminal stretch at M1 to A30 is a signal peptide. Positions L38–Y156 constitute an SCP domain.

Belongs to the CRISP family. Three disulfide bonds are present.

It is found in the vacuole. Probably involved in the defense reaction of plants against pathogens. The protein is Pathogenesis-related protein 1A of Nicotiana tabacum (Common tobacco).